The following is a 77-amino-acid chain: Small ribosomal subunit protein uS17 (77 aa).

The protein belongs to the universal ribosomal protein uS17 family. Part of the 30S ribosomal subunit.

Its function is as follows. One of the primary rRNA binding proteins, it binds specifically to the 5'-end of 16S ribosomal RNA. The sequence is that of Small ribosomal subunit protein uS17 from Rickettsia canadensis (strain McKiel).